A 447-amino-acid chain; its full sequence is Na(+)-translocating NADH-quinone reductase subunit A (447 aa).

This sequence belongs to the NqrA family. As to quaternary structure, composed of six subunits; NqrA, NqrB, NqrC, NqrD, NqrE and NqrF.

It catalyses the reaction a ubiquinone + n Na(+)(in) + NADH + H(+) = a ubiquinol + n Na(+)(out) + NAD(+). Functionally, NQR complex catalyzes the reduction of ubiquinone-1 to ubiquinol by two successive reactions, coupled with the transport of Na(+) ions from the cytoplasm to the periplasm. NqrA to NqrE are probably involved in the second step, the conversion of ubisemiquinone to ubiquinol. The polypeptide is Na(+)-translocating NADH-quinone reductase subunit A (Cellvibrio japonicus (strain Ueda107) (Pseudomonas fluorescens subsp. cellulosa)).